Here is a 1461-residue protein sequence, read N- to C-terminus: MGARNSVLRGKKADELEKIRLRPGGKKKYKLKHIVWAANELDRFGLAESLLESKEGCQKILTVLDPLVPTGSENLKSLFNTVCVIWCIHAEEKVKDTEGAKQIVQRHLVAETGTAEKMPNTSRPTAPPSGKNFPVQQVAGNYTHIPLSPGTLNAWVKLVEEKKFGAEVVPGFQALSEGCTPYDINQMLNCVGDHQAAMQIIREIINEEAADWDVAHPIPGPLPAGQLREPRGSDIAGTTSTVEEQIQWMFRPQNPVPVGNIYRRWIQIGLQKCVRMYNPTNILDINQGPKEPFQSYVDRFYKSLRAEQTDPAVKNWMTQTLLIQNANPDCKLVLKGLGMNPTLEEMLTTCQGVGGPGQKARLMAEALKEVMAPAPIPFAAAQQRKTFKCWNCGKEGHSARQWSAPRRQGCWKCGKSGHVMANCPDRQAGFLRDWPLGKEGPQLPRGPSPAGANTNSTPIGSSSGPTGEIYAARKKAKGAERETVQGSDRGLTAFRAGRDTMQGDDRGLAAPQFSLWKRPVVTAHIEGQPVEVLLDTRANDSIVAGIELGSNYSPKIVGGIGGFINTKEYKNVEIEVLGKRVKATIMTGDTPINIFGRNVLTALGMSLNLPVAKIEPIKIMLKPGKDGPRLKQWPLTKEKIEALKEICEKMEKEGQLEEAPPTNPYNTPTFAIKKKDKNKWRMLIDFRELNKVTQDFTEIQLGIPHPAGLAKKRRITVLDVGDAYFSIPLHEDFRQYTAFTLPSVNNAEPGKRYIYKVLPQGWKGSPAIFQYTMRQILEPFRKANEDVIIIQYMDDILIASDRTDLEHDKVVLQLKELLNGLGFSTPDEKFQKDPPYRWMGYELWPTKWKLQKIQLPQKEVWTVNDIQKLVGVLNWAAQIYPGIKTKHLCRLIRGKMTLTEEVQWTELAEAELEENRIILSQKQEGHYYQEEKKLEATVQKDQDNQWTYKVHQGEKILKGGKICKDKKYPYQRVRLLAQVVQKIGKEALVIWGRIPKFHLPVERDTWEQWWDNYWQVTWIPDWDFVSTPPLVRLAFNLVGEPVPGAETFYTDGSCNRQSKEGKAGYITDRGRDRVKVLEQTTNQQAELEAFAMALTDSGPKANIIVDSQYVMGIVAGQPTESENRIVNQIIEEMIKKEAIYVAWVPAHKGIGGNQEVDHLVSQGIRQVLFLEKIEPAQEEHEKYHSNIKELSHKFGIPKLVARQIVNTCAHVQQKGEAIHGQVNAELGTWQMDCTHLEGKVIIVAVHVASGFIEAEVIPQESGRQTALFLLKLASRWPITHLHTDNGANFTSQEVKMVAWWVGIEQTFGVPYNPQSQGVVEAMNHHLKNQIDRIREQANTVETIVLMAVHCMNFKRRGGIGDMTPAERIINMITTEQEIQFLQAKNSKLKNFRVYFREGRDQLWKGPGELLWKGDGAVIVKVGTEIKVVPRRKAKIIKDYGGRQEMDSGSHLEGAREDGEMA.

Gly-2 is lipidated: N-myristoyl glycine; by host. The segment at 7–31 (VLRGKKADELEKIRLRPGGKKKYKL) is interaction with Gp41. Residues 16 to 22 (LEKIRLR) carry the Nuclear export signal motif. The Nuclear localization signal motif lies at 26–32 (KKKYKLK). The interval 189-226 (NCVGDHQAAMQIIREIINEEAADWDVAHPIPGPLPAGQ) is interaction with human PPIA/CYPA and NUP153. The tract at residues 277 to 363 (YNPTNILDIN…GGPGQKARLM (87 aa)) is dimerization/Multimerization of capsid protein p24. 2 consecutive CCHC-type zinc fingers follow at residues 387 to 404 (FKCWNCGKEGHSARQWSA) and 408 to 425 (QGCWKCGKSGHVMANCPD). The tract at residues 436-467 (LGKEGPQLPRGPSPAGANTNSTPIGSSSGPTG) is disordered. The span at 453–467 (NTNSTPIGSSSGPTG) shows a compositional bias: low complexity. The dimerization of protease stretch occupies residues 511–515 (PQFSL). In terms of domain architecture, Peptidase A2 spans 530–599 (VEVLLDTRAN…TPINIFGRNV (70 aa)). The For protease activity; shared with dimeric partner role is filled by Asp-535. 2 dimerization of protease regions span residues 559–565 (GIGGFIN) and 598–610 (NVLTALGMSLNLP). The region spanning 653-843 (EGQLEEAPPT…PPYRWMGYEL (191 aa)) is the Reverse transcriptase domain. Mg(2+) contacts are provided by Asp-719, Asp-794, and Asp-795. The RT 'primer grip' stretch occupies residues 836-844 (YRWMGYELW). Residues 1006-1022 (WEQWWDNYWQVTWIPDW) carry the Tryptophan repeat motif motif. Residues 1042-1165 (VPGAETFYTD…VDHLVSQGIR (124 aa)) enclose the RNase H type-1 domain. Mg(2+) is bound by residues Asp-1051, Glu-1086, Asp-1106, and Asp-1157. The Integrase-type; degenerate zinc finger occupies 1171-1212 (EKIEPAQEEHEKYHSNIKELSHKFGIPKLVARQIVNTCAHVQ). The Integrase catalytic domain occupies 1221 to 1372 (QVNAELGTWQ…TPAERIINMI (152 aa)). Mg(2+) contacts are provided by Asp-1232, Asp-1284, and Glu-1320. The segment at residues 1391–1438 (FRVYFREGRDQLWKGPGELLWKGDGAVIVKVGTEIKVVPRRKAKIIKD) is a DNA-binding region (integrase-type).

Homotrimer; further assembles as hexamers of trimers. Interacts with gp41 (via C-terminus). Interacts with host CALM1; this interaction induces a conformational change in the Matrix protein, triggering exposure of the myristate group. Interacts with host AP3D1; this interaction allows the polyprotein trafficking to multivesicular bodies during virus assembly. Part of the pre-integration complex (PIC) which is composed of viral genome, matrix protein, Vpr and integrase. As to quaternary structure, homodimer; the homodimer further multimerizes as homohexamers or homopentamers. Interacts with human PPIA/CYPA. Interacts with human NUP153. Interacts with host PDZD8; this interaction stabilizes the capsid. Interacts with monkey TRIM5; this interaction destabilizes the capsid. In terms of assembly, homodimer, whose active site consists of two apposed aspartic acid residues. Heterodimer of p66 RT and p51 RT (RT p66/p51). Heterodimerization of RT is essential for DNA polymerase activity. The overall folding of the subdomains is similar in p66 RT and p51 RT but the spatial arrangements of the subdomains are dramatically different. As to quaternary structure, homotetramer; may further associate as a homohexadecamer. Part of the pre-integration complex (PIC) which is composed of viral genome, matrix protein, Vpr and integrase. Interacts with human SMARCB1/INI1 and human PSIP1/LEDGF isoform 1. Interacts with human KPNA3; this interaction might play a role in nuclear import of the pre-integration complex. Interacts with human NUP153; this interaction might play a role in nuclear import of the pre-integration complex. Requires Mg(2+) as cofactor. In terms of processing, specific enzymatic cleavages by the viral protease yield mature proteins. The protease is released by autocatalytic cleavage. The polyprotein is cleaved during and after budding, this process is termed maturation. Proteolytic cleavage of p66 RT removes the RNase H domain to yield the p51 RT subunit. Nucleocapsid protein p7 might be further cleaved after virus entry.

It localises to the host cell membrane. The protein localises to the host endosome. The protein resides in the host multivesicular body. It is found in the virion membrane. Its subcellular location is the host nucleus. It localises to the host cytoplasm. The protein localises to the virion. The catalysed reaction is Endopeptidase for which the P1 residue is preferably hydrophobic.. It carries out the reaction Endohydrolysis of RNA in RNA/DNA hybrids. Three different cleavage modes: 1. sequence-specific internal cleavage of RNA. Human immunodeficiency virus type 1 and Moloney murine leukemia virus enzymes prefer to cleave the RNA strand one nucleotide away from the RNA-DNA junction. 2. RNA 5'-end directed cleavage 13-19 nucleotides from the RNA end. 3. DNA 3'-end directed cleavage 15-20 nucleotides away from the primer terminus.. The enzyme catalyses 3'-end directed exonucleolytic cleavage of viral RNA-DNA hybrid.. It catalyses the reaction DNA(n) + a 2'-deoxyribonucleoside 5'-triphosphate = DNA(n+1) + diphosphate. With respect to regulation, protease: The viral protease is inhibited by many synthetic protease inhibitors (PIs), such as amprenavir, atazanavir, indinavir, loprinavir, nelfinavir, ritonavir and saquinavir. Use of protease inhibitors in tritherapy regimens permit more ambitious therapeutic strategies. Reverse transcriptase/ribonuclease H: RT can be inhibited either by nucleoside RT inhibitors (NRTIs) or by non nucleoside RT inhibitors (NNRTIs). NRTIs act as chain terminators, whereas NNRTIs inhibit DNA polymerization by binding a small hydrophobic pocket near the RT active site and inducing an allosteric change in this region. Classical NRTIs are abacavir, adefovir (PMEA), didanosine (ddI), lamivudine (3TC), stavudine (d4T), tenofovir (PMPA), zalcitabine (ddC), and zidovudine (AZT). Classical NNRTIs are atevirdine (BHAP U-87201E), delavirdine, efavirenz (DMP-266), emivirine (I-EBU), and nevirapine (BI-RG-587). The tritherapies used as a basic effective treatment of AIDS associate two NRTIs and one NNRTI. Mediates, with Gag polyprotein, the essential events in virion assembly, including binding the plasma membrane, making the protein-protein interactions necessary to create spherical particles, recruiting the viral Env proteins, and packaging the genomic RNA via direct interactions with the RNA packaging sequence (Psi). Gag-Pol polyprotein may regulate its own translation, by the binding genomic RNA in the 5'-UTR. At low concentration, the polyprotein would promote translation, whereas at high concentration, the polyprotein would encapsidate genomic RNA and then shut off translation. In terms of biological role, targets the polyprotein to the plasma membrane via a multipartite membrane-binding signal, that includes its myristoylated N-terminus. Matrix protein is part of the pre-integration complex. Implicated in the release from host cell mediated by Vpu. Binds to RNA. Functionally, forms the conical core that encapsulates the genomic RNA-nucleocapsid complex in the virion. Most core are conical, with only 7% tubular. The core is constituted by capsid protein hexamer subunits. The core is disassembled soon after virion entry. Host restriction factors such as TRIM5-alpha or TRIMCyp bind retroviral capsids and cause premature capsid disassembly, leading to blocks in reverse transcription. Capsid restriction by TRIM5 is one of the factors which restricts HIV-1 to the human species. Host PIN1 apparently facilitates the virion uncoating. On the other hand, interactions with PDZD8 or CYPA stabilize the capsid. Its function is as follows. Encapsulates and protects viral dimeric unspliced genomic RNA (gRNA). Binds these RNAs through its zinc fingers. Acts as a nucleic acid chaperone which is involved in rearangement of nucleic acid secondary structure during gRNA retrotranscription. Also facilitates template switch leading to recombination. As part of the polyprotein, participates in gRNA dimerization, packaging, tRNA incorporation and virion assembly. Aspartyl protease that mediates proteolytic cleavages of Gag and Gag-Pol polyproteins during or shortly after the release of the virion from the plasma membrane. Cleavages take place as an ordered, step-wise cascade to yield mature proteins. This process is called maturation. Displays maximal activity during the budding process just prior to particle release from the cell. Also cleaves Nef and Vif, probably concomitantly with viral structural proteins on maturation of virus particles. Hydrolyzes host EIF4GI and PABP1 in order to shut off the capped cellular mRNA translation. The resulting inhibition of cellular protein synthesis serves to ensure maximal viral gene expression and to evade host immune response. In terms of biological role, multifunctional enzyme that converts the viral RNA genome into dsDNA in the cytoplasm, shortly after virus entry into the cell. This enzyme displays a DNA polymerase activity that can copy either DNA or RNA templates, and a ribonuclease H (RNase H) activity that cleaves the RNA strand of RNA-DNA heteroduplexes in a partially processive 3' to 5' endonucleasic mode. Conversion of viral genomic RNA into dsDNA requires many steps. A tRNA(3)-Lys binds to the primer-binding site (PBS) situated at the 5'-end of the viral RNA. RT uses the 3' end of the tRNA primer to perform a short round of RNA-dependent minus-strand DNA synthesis. The reading proceeds through the U5 region and ends after the repeated (R) region which is present at both ends of viral RNA. The portion of the RNA-DNA heteroduplex is digested by the RNase H, resulting in a ssDNA product attached to the tRNA primer. This ssDNA/tRNA hybridizes with the identical R region situated at the 3' end of viral RNA. This template exchange, known as minus-strand DNA strong stop transfer, can be either intra- or intermolecular. RT uses the 3' end of this newly synthesized short ssDNA to perform the RNA-dependent minus-strand DNA synthesis of the whole template. RNase H digests the RNA template except for two polypurine tracts (PPTs) situated at the 5'-end and near the center of the genome. It is not clear if both polymerase and RNase H activities are simultaneous. RNase H probably can proceed both in a polymerase-dependent (RNA cut into small fragments by the same RT performing DNA synthesis) and a polymerase-independent mode (cleavage of remaining RNA fragments by free RTs). Secondly, RT performs DNA-directed plus-strand DNA synthesis using the PPTs that have not been removed by RNase H as primers. PPTs and tRNA primers are then removed by RNase H. The 3' and 5' ssDNA PBS regions hybridize to form a circular dsDNA intermediate. Strand displacement synthesis by RT to the PBS and PPT ends produces a blunt ended, linear dsDNA copy of the viral genome that includes long terminal repeats (LTRs) at both ends. Functionally, catalyzes viral DNA integration into the host chromosome, by performing a series of DNA cutting and joining reactions. This enzyme activity takes place after virion entry into a cell and reverse transcription of the RNA genome in dsDNA. The first step in the integration process is 3' processing. This step requires a complex comprising the viral genome, matrix protein, Vpr and integrase. This complex is called the pre-integration complex (PIC). The integrase protein removes 2 nucleotides from each 3' end of the viral DNA, leaving recessed CA OH's at the 3' ends. In the second step, the PIC enters cell nucleus. This process is mediated through integrase and Vpr proteins, and allows the virus to infect a non dividing cell. This ability to enter the nucleus is specific of lentiviruses, other retroviruses cannot and rely on cell division to access cell chromosomes. In the third step, termed strand transfer, the integrase protein joins the previously processed 3' ends to the 5' ends of strands of target cellular DNA at the site of integration. The 5'-ends are produced by integrase-catalyzed staggered cuts, 5 bp apart. A Y-shaped, gapped, recombination intermediate results, with the 5'-ends of the viral DNA strands and the 3' ends of target DNA strands remaining unjoined, flanking a gap of 5 bp. The last step is viral DNA integration into host chromosome. This involves host DNA repair synthesis in which the 5 bp gaps between the unjoined strands are filled in and then ligated. Since this process occurs at both cuts flanking the HIV genome, a 5 bp duplication of host DNA is produced at the ends of HIV-1 integration. Alternatively, Integrase may catalyze the excision of viral DNA just after strand transfer, this is termed disintegration. The sequence is that of Gag-Pol polyprotein (gag-pol) from Homo sapiens (Human).